Reading from the N-terminus, the 122-residue chain is MTTVAVWVGVALIGGVGSVLRFVVDGAVARRASRPFPLGTLVVNLSGAALLGFLGGLALSREAALLAGTAFVGAYTTFSTWMLETQRLGEERQLRAALANIVVSVVLGGAAAFIGQQLAQLV.

4 helical membrane passes run 4–24, 38–58, 63–83, and 96–116; these read VAVW…RFVV, LGTL…GGLA, AALL…TWML, and AALA…FIGQ. Residues Gly73 and Thr76 each contribute to the Na(+) site.

The protein belongs to the fluoride channel Fluc/FEX (TC 1.A.43) family.

The protein localises to the cell membrane. It catalyses the reaction fluoride(in) = fluoride(out). With respect to regulation, na(+) is not transported, but it plays an essential structural role and its presence is essential for fluoride channel function. In terms of biological role, fluoride-specific ion channel. Important for reducing fluoride concentration in the cell, thus reducing its toxicity. The polypeptide is Fluoride-specific ion channel FluC 2 (Mycolicibacterium paratuberculosis (strain ATCC BAA-968 / K-10) (Mycobacterium paratuberculosis)).